We begin with the raw amino-acid sequence, 95 residues long: Large ribosomal subunit protein bL31 (95 aa).

Residues 68–95 are disordered; it reads AGLNNINKKPEKKKIQGKSEPRKSLNEL. The span at 80–95 shows a compositional bias: basic and acidic residues; that stretch reads KKIQGKSEPRKSLNEL.

The protein belongs to the bacterial ribosomal protein bL31 family. Type A subfamily. In terms of assembly, part of the 50S ribosomal subunit.

Its function is as follows. Binds the 23S rRNA. The sequence is that of Large ribosomal subunit protein bL31 from Ureaplasma parvum serovar 3 (strain ATCC 700970).